The primary structure comprises 786 residues: LPS-assembly protein LptD (786 aa).

A signal peptide spans 1 to 39 (MPPKPLFPNVFPGDGAPRKRRLALALLAVPGLVPAVSYA). The interval 767 to 786 (PGYTPLPPPPPPMSRFSNYE) is disordered. Residues 770–779 (TPLPPPPPPM) show a composition bias toward pro residues.

It belongs to the LptD family. Component of the lipopolysaccharide transport and assembly complex. Interacts with LptE and LptA.

It is found in the cell outer membrane. Together with LptE, is involved in the assembly of lipopolysaccharide (LPS) at the surface of the outer membrane. This chain is LPS-assembly protein LptD, found in Burkholderia cenocepacia (strain HI2424).